A 514-amino-acid chain; its full sequence is uncharacterized protein (514 aa).

This is an uncharacterized protein from Caenorhabditis elegans.